A 249-amino-acid polypeptide reads, in one-letter code: Chitooligosaccharide deacetylase (249 aa).

Positions 61 and 125 each coordinate Mg(2+).

It belongs to the YdjC deacetylase family. ChbG subfamily. Homodimer. Requires Mg(2+) as cofactor.

The protein resides in the cytoplasm. The enzyme catalyses N,N'-diacetylchitobiose + H2O = N-acetyl-beta-D-glucosaminyl-(1-&gt;4)-D-glucosamine + acetate. The catalysed reaction is diacetylchitobiose-6'-phosphate + H2O = N'-monoacetylchitobiose-6'-phosphate + acetate. It functions in the pathway glycan degradation; chitin degradation. Involved in the degradation of chitin. ChbG is essential for growth on the acetylated chitooligosaccharides chitobiose and chitotriose but is dispensable for growth on cellobiose and chitosan dimer, the deacetylated form of chitobiose. Deacetylation of chitobiose-6-P and chitotriose-6-P is necessary for both the activation of the chb promoter by the regulatory protein ChbR and the hydrolysis of phosphorylated beta-glucosides by the phospho-beta-glucosidase ChbF. Catalyzes the removal of only one acetyl group from chitobiose-6-P to yield monoacetylchitobiose-6-P, the inducer of ChbR and the substrate of ChbF. The protein is Chitooligosaccharide deacetylase of Escherichia coli (strain K12 / MC4100 / BW2952).